A 176-amino-acid polypeptide reads, in one-letter code: Endoribonuclease YbeY (176 aa).

3 residues coordinate Zn(2+): His-128, His-132, and His-138.

It belongs to the endoribonuclease YbeY family. Requires Zn(2+) as cofactor.

It is found in the cytoplasm. Functionally, single strand-specific metallo-endoribonuclease involved in late-stage 70S ribosome quality control and in maturation of the 3' terminus of the 16S rRNA. This is Endoribonuclease YbeY from Zymomonas mobilis subsp. mobilis (strain ATCC 31821 / ZM4 / CP4).